We begin with the raw amino-acid sequence, 179 residues long: Inner membrane-spanning protein YciB (179 aa).

5 consecutive transmembrane segments (helical) span residues 3-23 (FLYDLFPVILFFIVYKLFGIY), 49-69 (NALIMSGVIIVVFGGATLWLQ), 76-96 (WKPTILYWVFTVGLLGSQWLF), 119-139 (LNLAWAIFFLLLGFLNLYVAY), and 149-169 (FKLFGTMGLMFVFVIGQTLLL).

This sequence belongs to the YciB family.

The protein resides in the cell inner membrane. In terms of biological role, plays a role in cell envelope biogenesis, maintenance of cell envelope integrity and membrane homeostasis. The protein is Inner membrane-spanning protein YciB of Methylobacillus flagellatus (strain ATCC 51484 / DSM 6875 / VKM B-1610 / KT).